A 62-amino-acid polypeptide reads, in one-letter code: Large ribosomal subunit protein bL28 (62 aa).

This sequence belongs to the bacterial ribosomal protein bL28 family.

This is Large ribosomal subunit protein bL28 from Helicobacter acinonychis (strain Sheeba).